Consider the following 432-residue polypeptide: Glutamate-1-semialdehyde 2,1-aminomutase (432 aa).

Lys266 carries the N6-(pyridoxal phosphate)lysine modification.

This sequence belongs to the class-III pyridoxal-phosphate-dependent aminotransferase family. HemL subfamily. Homodimer. The cofactor is pyridoxal 5'-phosphate.

It is found in the cytoplasm. It carries out the reaction (S)-4-amino-5-oxopentanoate = 5-aminolevulinate. Its pathway is porphyrin-containing compound metabolism; protoporphyrin-IX biosynthesis; 5-aminolevulinate from L-glutamyl-tRNA(Glu): step 2/2. The protein is Glutamate-1-semialdehyde 2,1-aminomutase of Janthinobacterium sp. (strain Marseille) (Minibacterium massiliensis).